The sequence spans 409 residues: MDSNFIFGIGAFTAIVLVLAVVILIAKSKLVDSGDITISINDDPSKAITLPAGGKLLGALASKGIFVSSACGGGGSCGQCRVKVKSGGGEILPTELSHISKKEAKEGWRLSCQVNVKSSMDVELPEEVFGVKKWECTVISNDNKATFIKELKLAIPEGEEVPFRAGGYIQIEAEPHTVAYKDFDIPEEYHEDWDKFNLWRYVSKVDEHIIRAYSMASYPEEKGIIMLNVRIATPPPRNPNVPPGQMSSYIWSLKPGDKVTISGPFGEFFAKDTDAEMVFIGGGAGMAPMRSHIFDQLKRLHSKRKISFWYGARSKREMFYVEDFDQLQAENPNFTWHVALSDPLPEDNWDGYTGFIHNVLYENYLKNHEAPEDCEYYMCGPPVMNAAVIKMLEDLGVEHENILLDDFGG.

Residues Phe5–Ile25 traverse the membrane as a helical segment. In terms of domain architecture, 2Fe-2S ferredoxin-type spans Gly34–Val128. 4 residues coordinate [2Fe-2S] cluster: Cys71, Cys77, Cys80, and Cys112. Residues Val131–Lys271 form the FAD-binding FR-type domain.

The protein belongs to the NqrF family. In terms of assembly, composed of six subunits; NqrA, NqrB, NqrC, NqrD, NqrE and NqrF. Requires [2Fe-2S] cluster as cofactor. FAD serves as cofactor.

Its subcellular location is the cell inner membrane. It catalyses the reaction a ubiquinone + n Na(+)(in) + NADH + H(+) = a ubiquinol + n Na(+)(out) + NAD(+). Its function is as follows. NQR complex catalyzes the reduction of ubiquinone-1 to ubiquinol by two successive reactions, coupled with the transport of Na(+) ions from the cytoplasm to the periplasm. The first step is catalyzed by NqrF, which accepts electrons from NADH and reduces ubiquinone-1 to ubisemiquinone by a one-electron transfer pathway. The sequence is that of Na(+)-translocating NADH-quinone reductase subunit F from Actinobacillus succinogenes (strain ATCC 55618 / DSM 22257 / CCUG 43843 / 130Z).